The sequence spans 60 residues: Large ribosomal subunit protein uL30 (60 aa).

This sequence belongs to the universal ribosomal protein uL30 family. As to quaternary structure, part of the 50S ribosomal subunit.

This Ralstonia pickettii (strain 12J) protein is Large ribosomal subunit protein uL30.